Consider the following 563-residue polypeptide: Arginine--tRNA ligase (563 aa).

The 'HIGH' region signature appears at 121-131; that stretch reads PNIAKPFSIGH.

Belongs to the class-I aminoacyl-tRNA synthetase family. In terms of assembly, monomer.

It localises to the cytoplasm. It catalyses the reaction tRNA(Arg) + L-arginine + ATP = L-arginyl-tRNA(Arg) + AMP + diphosphate. The chain is Arginine--tRNA ligase from Streptococcus agalactiae serotype Ia (strain ATCC 27591 / A909 / CDC SS700).